The following is a 338-amino-acid chain: Lipoate-protein ligase A (338 aa).

The BPL/LPL catalytic domain occupies 29 to 216; the sequence is PATQRVLFLW…AFFSHYGERV (188 aa). ATP contacts are provided by residues Arg-71, 76 to 79, and Lys-134; that span reads GAVF. Lys-134 is a binding site for (R)-lipoate.

It belongs to the LplA family. Monomer.

The protein localises to the cytoplasm. The enzyme catalyses L-lysyl-[lipoyl-carrier protein] + (R)-lipoate + ATP = N(6)-[(R)-lipoyl]-L-lysyl-[lipoyl-carrier protein] + AMP + diphosphate + H(+). It functions in the pathway protein modification; protein lipoylation via exogenous pathway; protein N(6)-(lipoyl)lysine from lipoate: step 1/2. The protein operates within protein modification; protein lipoylation via exogenous pathway; protein N(6)-(lipoyl)lysine from lipoate: step 2/2. Functionally, catalyzes both the ATP-dependent activation of exogenously supplied lipoate to lipoyl-AMP and the transfer of the activated lipoyl onto the lipoyl domains of lipoate-dependent enzymes. The protein is Lipoate-protein ligase A of Klebsiella pneumoniae (strain 342).